Reading from the N-terminus, the 122-residue chain is UPF0382 membrane protein SAB0533 (122 aa).

4 helical membrane passes run 3-23 (LFII…AFGA), 46-66 (MYHG…SINV), 69-89 (AGWL…ILVL), and 98-118 (ITPI…IATF).

It belongs to the UPF0382 family.

It localises to the cell membrane. The polypeptide is UPF0382 membrane protein SAB0533 (Staphylococcus aureus (strain bovine RF122 / ET3-1)).